Here is a 113-residue protein sequence, read N- to C-terminus: Dolichyl-diphosphooligosaccharide--protein glycosyltransferase subunit DAD1 (113 aa).

Ser-2 is subject to N-acetylserine. At 2 to 30 (SASVLSVISRFLEEYLSATPQRLKLLDAY) the chain is on the cytoplasmic side. Residues 31–51 (LLYILLTGALQFGYCLLVGTF) traverse the membrane as a helical segment. Pro-52 is a topological domain (lumenal). The chain crosses the membrane as a helical span at residues 53–73 (FNSFLSGFISCVGSFILAVCL). The Cytoplasmic portion of the chain corresponds to 74–92 (RIQINPQNKADFQGISPER). The chain crosses the membrane as a helical span at residues 93–113 (AFADFLFASTILHLVVMNFVG).

The protein belongs to the DAD/OST2 family. As to quaternary structure, component of the oligosaccharyltransferase (OST) complex. OST exists in two different complex forms which contain common core subunits RPN1, RPN2, OST48, OST4, DAD1 and TMEM258, either STT3A or STT3B as catalytic subunits, and form-specific accessory subunits. STT3A complex assembly occurs through the formation of 3 subcomplexes. Subcomplex 1 contains RPN1 and TMEM258, subcomplex 2 contains the STT3A-specific subunits STT3A, DC2/OSTC, and KCP2 as well as the core subunit OST4, and subcomplex 3 contains RPN2, DAD1, and OST48. The STT3A complex can form stable complexes with the Sec61 complex or with both the Sec61 and TRAP complexes.

The protein resides in the endoplasmic reticulum membrane. It participates in protein modification; protein glycosylation. In terms of biological role, subunit of the oligosaccharyl transferase (OST) complex that catalyzes the initial transfer of a defined glycan (Glc(3)Man(9)GlcNAc(2) in eukaryotes) from the lipid carrier dolichol-pyrophosphate to an asparagine residue within an Asn-X-Ser/Thr consensus motif in nascent polypeptide chains, the first step in protein N-glycosylation. N-glycosylation occurs cotranslationally and the complex associates with the Sec61 complex at the channel-forming translocon complex that mediates protein translocation across the endoplasmic reticulum (ER). All subunits are required for a maximal enzyme activity. The polypeptide is Dolichyl-diphosphooligosaccharide--protein glycosyltransferase subunit DAD1 (Bos taurus (Bovine)).